The following is a 650-amino-acid chain: Kinesin-like protein KIF22-B (650 aa).

The 329-residue stretch at 31–359 (RVRVAVRLRP…LNFAAKSKQI (329 aa)) folds into the Kinesin motor domain. 116 to 123 (GPTGAGKT) is an ATP binding site. Residues 365–416 (SRETTQTVAQPAMKRPREEAEATTSSRQRKKSKTDSTESSPNSSMESTGKRK) form a disordered region. Positions 401-411 (TESSPNSSMES) are enriched in low complexity. A coiled-coil region spans residues 452 to 498 (KRERMALLKKWEESQMEIERLKEKQKELEQKAMEAEARLEKSNNSDL). Residues 560 to 563 (GHEN) carry the Important for regulated proteolytic degradation motif.

Belongs to the TRAFAC class myosin-kinesin ATPase superfamily. Kinesin family. Ubiquitinated, leading to its subsequent proteasomal degradation.

The protein localises to the nucleus. It is found in the cytoplasm. The protein resides in the cytoskeleton. In terms of biological role, kinesin family member that is involved in spindle formation and the movements of chromosomes during mitosis and meiosis. Binds to microtubules and to DNA. In Xenopus laevis (African clawed frog), this protein is Kinesin-like protein KIF22-B (kif22-b).